A 128-amino-acid polypeptide reads, in one-letter code: uncharacterized protein (128 aa).

Residues 25 to 61 (LPNRLPEGSTVGPKPDSSWEAGSQGNWGLTSSGAGQD) are disordered. Over residues 44–61 (EAGSQGNWGLTSSGAGQD) the composition is skewed to polar residues.

This is an uncharacterized protein from Homo sapiens (Human).